The following is a 59-amino-acid chain: Beta-defensin 134 (59 aa).

Positions 1-19 (MKPLLVVFVFLFLWDPVLA) are cleaved as a signal peptide. 3 cysteine pairs are disulfide-bonded: Cys25–Cys51, Cys31–Cys45, and Cys35–Cys52.

It belongs to the beta-defensin family.

Its subcellular location is the secreted. Its function is as follows. Has antibacterial activity. The polypeptide is Beta-defensin 134 (DEFB134) (Pan troglodytes (Chimpanzee)).